We begin with the raw amino-acid sequence, 698 residues long: eEF1A lysine and N-terminal methyltransferase (698 aa).

Met-1 carries the N-acetylmethionine modification. At Ser-267 the chain carries Phosphoserine. Residues 431 to 461 are disordered; the sequence is KDTSHRAQKKRKKDRKKQRPADTSEDFPPAP. A compositionally biased stretch (basic residues) spans 436 to 448; that stretch reads RAQKKRKKDRKKQ.

It belongs to the methyltransferase superfamily. As to quaternary structure, forms a tripartite complex containing GAB1, METTL13 and SPRY2. Within the complex interacts with GAB1 and SPRY2. Expressed in the inner ear (at protein level). Expression is detected in the cochlear duct, spiral limbus region, efferent and afferent nerves, and in spiral ganglion neurons (at protein level).

It localises to the cytoplasm. Its subcellular location is the nucleus. The protein resides in the mitochondrion. It carries out the reaction L-lysyl-[protein] + S-adenosyl-L-methionine = N(6)-methyl-L-lysyl-[protein] + S-adenosyl-L-homocysteine + H(+). It catalyses the reaction N(6)-methyl-L-lysyl-[protein] + S-adenosyl-L-methionine = N(6),N(6)-dimethyl-L-lysyl-[protein] + S-adenosyl-L-homocysteine + H(+). The enzyme catalyses N-terminal glycyl-L-lysyl-L-glutamyl-[protein] + 3 S-adenosyl-L-methionine = N-terminal N,N,N-trimethyl-glycyl-L-lysyl-L-glutamyl-[protein] + 3 S-adenosyl-L-homocysteine + 3 H(+). Its function is as follows. Dual methyltransferase that catalyzes methylation of elongation factor 1-alpha (EEF1A1 and EEF1A2) at two different positions, and is therefore involved in the regulation of mRNA translation. Via its C-terminus, methylates EEF1A1 and EEF1A2 at the N-terminal residue 'Gly-2'. Via its N-terminus dimethylates EEF1A1 and EEF1A2 at residue 'Lys-55'. Has no activity towards core histones H2A, H2B, H3 and H4. The chain is eEF1A lysine and N-terminal methyltransferase from Mus musculus (Mouse).